The primary structure comprises 602 residues: Sodium- and chloride-dependent GABA transporter 2 (602 aa).

Over residues 1 to 13 (MDSRVSGTTSNGE) the composition is skewed to polar residues. The segment at 1-22 (MDSRVSGTTSNGETKPVYPVME) is disordered. Topologically, residues 1–40 (MDSRVSGTTSNGETKPVYPVMEKKEEDGTLERGHWNNKME) are cytoplasmic. 3 helical membrane passes run 41 to 61 (FVLS…FPYL), 68 to 88 (GAFF…VFLL), and 121 to 141 (IVIL…FYLF). Topologically, residues 142–206 (SSFTIDLPWG…GIQHLGALRW (65 aa)) are extracellular. C153 and C162 are disulfide-bonded. N173 carries N-linked (GlcNAc...) asparagine glycosylation. 2 consecutive transmembrane segments (helical) span residues 207-227 (ELAL…WKGV) and 233-253 (VVYF…IRGV). N-linked (GlcNAc...) asparagine glycosylation is present at N269. 7 consecutive transmembrane segments (helical) span residues 282-302 (AGTQ…ALGS), 319-339 (FLNS…LGFM), 366-386 (VVML…VVLL), 418-438 (VLIL…LTEG), 453-473 (GMCL…VYGA), 490-510 (PLIK…TFLF), and 528-548 (WWGD…IPAW). The Cytoplasmic segment spans residues 549–602 (SLYRLGTLKGPFRERIRQLMCPAEDLPQRNPAGPSAPATPRTSLLRLTELESHC). T587 is subject to Phosphothreonine. S591 is subject to Phosphoserine.

Belongs to the sodium:neurotransmitter symporter (SNF) (TC 2.A.22) family. SLC6A13 subfamily. In terms of tissue distribution, expressed in brain, kidney, lung, liver and testis.

It localises to the cell membrane. It is found in the basolateral cell membrane. It carries out the reaction 4-aminobutanoate(out) + chloride(out) + 2 Na(+)(out) = 4-aminobutanoate(in) + chloride(in) + 2 Na(+)(in). It catalyses the reaction taurine(out) + chloride(out) + 2 Na(+)(out) = taurine(in) + chloride(in) + 2 Na(+)(in). The catalysed reaction is beta-alanine(out) + chloride(out) + 2 Na(+)(out) = beta-alanine(in) + chloride(in) + 2 Na(+)(in). The enzyme catalyses hypotaurine(out) + chloride(out) + 2 Na(+)(out) = hypotaurine(in) + chloride(in) + 2 Na(+)(in). GABA transport is inhibited by beta-alanine, 2,3-diaminopropionic acid and SNAP-5114. Mediates sodium- and chloride-dependent transport of gamma-aminobutyric acid (GABA). Mediates transport of beta-alanine. Can also mediate transport of taurine and hypotaurine. The protein is Sodium- and chloride-dependent GABA transporter 2 (SLC6A13) of Homo sapiens (Human).